Consider the following 316-residue polypeptide: Probable cell division protein WhiA (316 aa).

The H-T-H motif DNA-binding region spans serine 280–threonine 313.

Belongs to the WhiA family.

Involved in cell division and chromosome segregation. In Clostridium perfringens (strain ATCC 13124 / DSM 756 / JCM 1290 / NCIMB 6125 / NCTC 8237 / Type A), this protein is Probable cell division protein WhiA.